The following is a 121-amino-acid chain: Large ribosomal subunit protein bL17 (121 aa).

The protein belongs to the bacterial ribosomal protein bL17 family. Part of the 50S ribosomal subunit. Contacts protein L32.

The polypeptide is Large ribosomal subunit protein bL17 (Sulfurihydrogenibium sp. (strain YO3AOP1)).